The following is a 268-amino-acid chain: Ribonuclease P protein subunit p30 (268 aa).

A2 carries the post-translational modification N-acetylalanine. The segment at 247–268 (KPRPSEGDEDCLPASKKAKCEG) is disordered. The residue at position 251 (S251) is a Phosphoserine.

Belongs to the eukaryotic/archaeal RNase P protein component 3 family. As to quaternary structure, component of nuclear RNase P and RNase MRP ribonucleoproteins. RNase P consists of a catalytic RNA moiety and about 10 protein subunits; POP1, POP4, POP5, POP7, RPP14, RPP21, RPP25, RPP30, RPP38 and RPP40. Within the RNase P complex, POP1, POP7 and RPP25 form the 'finger' subcomplex, POP5, RPP14, RPP40 and homodimeric RPP30 form the 'palm' subcomplex, and RPP21, POP4 and RPP38 form the 'wrist' subcomplex. All subunits of the RNase P complex interact with the catalytic RNA. Several subunits of RNase P are also part of the RNase MRP complex. RNase MRP consists of a catalytic RNA moiety and about 8 protein subunits; POP1, POP7, RPP25, RPP30, RPP38, RPP40 and possibly also POP4 and POP5.

It is found in the nucleus. It localises to the nucleolus. In terms of biological role, component of ribonuclease P, a ribonucleoprotein complex that generates mature tRNA molecules by cleaving their 5'-ends. Also a component of the MRP ribonuclease complex, which cleaves pre-rRNA sequences. In Homo sapiens (Human), this protein is Ribonuclease P protein subunit p30 (RPP30).